A 904-amino-acid chain; its full sequence is DNA mismatch repair protein MutS (904 aa).

655–662 (GPNMGGKS) contacts ATP.

This sequence belongs to the DNA mismatch repair MutS family.

Its function is as follows. This protein is involved in the repair of mismatches in DNA. It is possible that it carries out the mismatch recognition step. This protein has a weak ATPase activity. This is DNA mismatch repair protein MutS from Rhizorhabdus wittichii (strain DSM 6014 / CCUG 31198 / JCM 15750 / NBRC 105917 / EY 4224 / RW1) (Sphingomonas wittichii).